The primary structure comprises 361 residues: Spermatogenesis-associated protein 17 (361 aa).

3 consecutive IQ domains span residues 32–61 (ENDA…IVTI), 55–84 (LNRI…VAYY), and 91–120 (YNAM…LKEY).

It is found in the cytoplasm. The chain is Spermatogenesis-associated protein 17 (SPATA17) from Homo sapiens (Human).